Consider the following 270-residue polypeptide: Orotidine 5'-phosphate decarboxylase (270 aa).

Substrate contacts are provided by residues Asp-41, 63 to 65 (KTH), 95 to 104 (DRKFADIGNT), Tyr-221, and Arg-239. The active-site Proton donor is the Lys-97.

The protein belongs to the OMP decarboxylase family.

The enzyme catalyses orotidine 5'-phosphate + H(+) = UMP + CO2. It functions in the pathway pyrimidine metabolism; UMP biosynthesis via de novo pathway; UMP from orotate: step 2/2. The polypeptide is Orotidine 5'-phosphate decarboxylase (URA3) (Candida boidinii (Yeast)).